A 201-amino-acid polypeptide reads, in one-letter code: LexA repressor (201 aa).

Residues 29 to 49 constitute a DNA-binding region (H-T-H motif); sequence VREICKAVGLSSTSSVHFHLK. Residues S125 and K162 each act as for autocatalytic cleavage activity in the active site.

Belongs to the peptidase S24 family. As to quaternary structure, homodimer.

It carries out the reaction Hydrolysis of Ala-|-Gly bond in repressor LexA.. Its function is as follows. Represses a number of genes involved in the response to DNA damage (SOS response), including recA and lexA. In the presence of single-stranded DNA, RecA interacts with LexA causing an autocatalytic cleavage which disrupts the DNA-binding part of LexA, leading to derepression of the SOS regulon and eventually DNA repair. The polypeptide is LexA repressor (Clostridium botulinum (strain ATCC 19397 / Type A)).